The primary structure comprises 414 residues: 2,3-diketo-5-methylthiopentyl-1-phosphate enolase (414 aa).

Residue K99 is the Proton acceptor of the active site. Residues K148, 174–177, H265, G338, and 360–361 contribute to the substrate site; these read KDDE and GG. Residues K174, D176, and E177 each coordinate Mg(2+). Residue K174 is modified to N6-carboxylysine.

The protein belongs to the RuBisCO large chain family. Type IV subfamily. In terms of assembly, homodimer. Mg(2+) serves as cofactor.

It catalyses the reaction 5-methylsulfanyl-2,3-dioxopentyl phosphate = 2-hydroxy-5-methylsulfanyl-3-oxopent-1-enyl phosphate. Its pathway is amino-acid biosynthesis; L-methionine biosynthesis via salvage pathway; L-methionine from S-methyl-5-thio-alpha-D-ribose 1-phosphate: step 3/6. Functionally, catalyzes the enolization of 2,3-diketo-5-methylthiopentyl-1-phosphate (DK-MTP-1-P) into 2-hydroxy-3-keto-5-methylthiopentenyl-1-phosphate (HK-MTPenyl-1-P). This chain is 2,3-diketo-5-methylthiopentyl-1-phosphate enolase, found in Bacillus cereus (strain G9842).